The primary structure comprises 204 residues: B9 domain-containing protein 1 (204 aa).

The C2 B9-type domain occupies 9 to 127 (FLLMVNGQVE…TIPMFVPEST (119 aa)). Residues 182–204 (GYDTGPSDTQGVLGPSPPQSFPQ) form a disordered region.

The protein belongs to the B9D family. In terms of assembly, part of the tectonic-like complex (also named B9 complex).

It is found in the cytoplasm. The protein resides in the cytoskeleton. The protein localises to the cilium basal body. It localises to the cilium axoneme. Its function is as follows. Component of the tectonic-like complex, a complex localized at the transition zone of primary cilia and acting as a barrier that prevents diffusion of transmembrane proteins between the cilia and plasma membranes. Required for ciliogenesis and sonic hedgehog/SHH signaling. The chain is B9 domain-containing protein 1 (B9D1) from Homo sapiens (Human).